A 453-amino-acid polypeptide reads, in one-letter code: tRNA modification GTPase MnmE (453 aa).

(6S)-5-formyl-5,6,7,8-tetrahydrofolate contacts are provided by Arg-22, Glu-79, and Lys-119. The region spanning 215–376 is the TrmE-type G domain; that stretch reads GMKVVIAGRP…LRQHLKECMG (162 aa). Residue Asn-225 coordinates K(+). GTP is bound by residues 225-230, 244-250, 269-272, and 334-337; these read NAGKSS, TDIAGTT, DTAG, and NKAD. Ser-229 is a Mg(2+) binding site. Residues Thr-244, Ile-246, and Thr-249 each coordinate K(+). Position 250 (Thr-250) interacts with Mg(2+). (6S)-5-formyl-5,6,7,8-tetrahydrofolate is bound at residue Lys-453.

It belongs to the TRAFAC class TrmE-Era-EngA-EngB-Septin-like GTPase superfamily. TrmE GTPase family. As to quaternary structure, homodimer. Heterotetramer of two MnmE and two MnmG subunits. Requires K(+) as cofactor.

The protein resides in the cytoplasm. In terms of biological role, exhibits a very high intrinsic GTPase hydrolysis rate. Involved in the addition of a carboxymethylaminomethyl (cmnm) group at the wobble position (U34) of certain tRNAs, forming tRNA-cmnm(5)s(2)U34. The protein is tRNA modification GTPase MnmE of Vibrio cholerae serotype O1 (strain ATCC 39541 / Classical Ogawa 395 / O395).